We begin with the raw amino-acid sequence, 186 residues long: MEPSNDVALDIIVTNVVSVFRTRCHLNLRTIGLEGTNVIYKPEVGKVLMKLRKPRITASIWSSGKIICTGATSEEEAKLGARRLARCLQKMGFKVRFSDFKVVNVLAVCSMPFQIRLIEFTKNNRPIASYEPELHPAASYRIKNLRSTVQVFSTGNITVTGPNVQSVASAVEEIYPLLFECRKTLS.

The protein belongs to the TBP family.

The protein localises to the cytoplasm. It localises to the nucleus. Its function is as follows. Part of a specialized transcription system that mediates the transcription of most ribosomal proteins through the 5'-TCT-3' motif which is a core promoter element at these genes. Seems to also mediate the transcription of NF1. Does not bind the TATA box. Members of the TBP family are differentially required to regulate transcription and development during early embryogenesis. The chain is TATA box-binding protein-like 1 from Danio rerio (Zebrafish).